We begin with the raw amino-acid sequence, 432 residues long: Tryptophan--tRNA ligase, cytoplasmic (432 aa).

A 'HIGH' region motif is present at residues 111–120 (PSSDSMHLGH). The 'KMSKS' region motif lies at 295–299 (KMSAS).

It belongs to the class-I aminoacyl-tRNA synthetase family. Homodimer.

Its subcellular location is the cytoplasm. The catalysed reaction is tRNA(Trp) + L-tryptophan + ATP = L-tryptophyl-tRNA(Trp) + AMP + diphosphate + H(+). In Saccharomyces cerevisiae (strain ATCC 204508 / S288c) (Baker's yeast), this protein is Tryptophan--tRNA ligase, cytoplasmic (WRS1).